We begin with the raw amino-acid sequence, 125 residues long: MFGIGTDIIEIDRIRRAYHTYGDRFLNKIFTKGEQAYCFSKSDPYASLAVRFAAKEAVSKALGTGIGKSLKWKEIEISRGTQHPQVSVPESLLALLEVKRILLSMSHCREYATAVAIAEVTNSSK.

Positions 7 and 56 each coordinate Mg(2+).

It belongs to the P-Pant transferase superfamily. AcpS family. The cofactor is Mg(2+).

It is found in the cytoplasm. The catalysed reaction is apo-[ACP] + CoA = holo-[ACP] + adenosine 3',5'-bisphosphate + H(+). In terms of biological role, transfers the 4'-phosphopantetheine moiety from coenzyme A to a Ser of acyl-carrier-protein. This Chlamydia muridarum (strain MoPn / Nigg) protein is Holo-[acyl-carrier-protein] synthase.